We begin with the raw amino-acid sequence, 264 residues long: Tritrans,polycis-undecaprenyl-diphosphate synthase (geranylgeranyl-diphosphate specific) (264 aa).

The active site involves aspartate 43. Aspartate 43 provides a ligand contact to Mg(2+). Residues 44–47 (GNRR), tryptophan 48, histidine 60, and 88–90 (STE) contribute to the substrate site. Asparagine 91 serves as the catalytic Proton acceptor. Substrate is bound by residues phenylalanine 92, arginine 94, arginine 213, and 219-221 (RIS). Glutamate 232 contributes to the Mg(2+) binding site.

This sequence belongs to the UPP synthase family. As to quaternary structure, homodimer. Requires Mg(2+) as cofactor.

The catalysed reaction is geranylgeranyl diphosphate + 7 isopentenyl diphosphate = tri-trans,hepta-cis-undecaprenyl diphosphate + 7 diphosphate. Catalyzes the sequential condensation of isopentenyl diphosphate (IPP) with geranylgeranyl diphosphate (GGPP) to yield (2Z,6Z,10Z,14Z,18Z,22Z,26Z,30E,34E,38E)-undecaprenyl diphosphate (tritrans,heptacis-UPP). It is probably the precursor of glycosyl carrier lipids. This chain is Tritrans,polycis-undecaprenyl-diphosphate synthase (geranylgeranyl-diphosphate specific), found in Pyrococcus horikoshii (strain ATCC 700860 / DSM 12428 / JCM 9974 / NBRC 100139 / OT-3).